The primary structure comprises 308 residues: Transaldolase (308 aa).

The active-site Schiff-base intermediate with substrate is K125.

The protein belongs to the transaldolase family. Type 1 subfamily. In terms of assembly, homodimer.

Its subcellular location is the cytoplasm. It carries out the reaction D-sedoheptulose 7-phosphate + D-glyceraldehyde 3-phosphate = D-erythrose 4-phosphate + beta-D-fructose 6-phosphate. Its pathway is carbohydrate degradation; pentose phosphate pathway; D-glyceraldehyde 3-phosphate and beta-D-fructose 6-phosphate from D-ribose 5-phosphate and D-xylulose 5-phosphate (non-oxidative stage): step 2/3. Transaldolase is important for the balance of metabolites in the pentose-phosphate pathway. This chain is Transaldolase, found in Pseudomonas fluorescens (strain ATCC BAA-477 / NRRL B-23932 / Pf-5).